The chain runs to 1328 residues: Retrovirus-related Pol polyprotein from transposon TNT 1-94 (1328 aa).

The tract at residues 189–265 (PENQGQALIT…SGQKNDDNTA (77 aa)) is disordered. Positions 217–229 (ARGKSKNRSKSRV) are enriched in basic residues. The segment at 230–247 (RNCYNCNQPGHFKRDCPN) adopts a CCHC-type zinc-finger fold. A compositionally biased stretch (basic and acidic residues) spans 241-253 (FKRDCPNPRKGKG). D297 serves as the catalytic For protease activity. The Integrase catalytic domain occupies 473–642 (SSERKLNILD…IPERVWTNKE (170 aa)). Polar residues predominate over residues 729 to 742 (TIPSTSNNPTSAES). The disordered stretch occupies residues 729–800 (TIPSTSNNPT…RVESRRYPST (72 aa)). Basic and acidic residues predominate over residues 770–798 (EVEHPTQGEEQHQPLRRSERPRVESRRYP).

It catalyses the reaction DNA(n) + a 2'-deoxyribonucleoside 5'-triphosphate = DNA(n+1) + diphosphate. In Nicotiana tabacum (Common tobacco), this protein is Retrovirus-related Pol polyprotein from transposon TNT 1-94.